The following is an 822-amino-acid chain: AP-1 complex subunit gamma-1 (822 aa).

The segment at Glu-597–Leu-628 is disordered. The GAE domain maps to Ala-702–Pro-817.

Belongs to the adaptor complexes large subunit family. As to quaternary structure, adaptor protein complex 1 (AP-1) is a heterotetramer composed of two large adaptins (gamma-type subunit AP1G1 and beta-type subunit AP1B1), a medium adaptin (mu-type subunit AP1M1 or AP1M2) and a small adaptin (sigma-type subunit AP1S1 or AP1S2 or AP1S3). Interacts (via GAE domain) with RABEP1. Interacts with EPS15. Interacts with SYNRG/gamma-synergin. Interacts (via GAE domain) with AP1AR (via coiled-coil domain). Interacts with CLN3 (via dileucine motif); this interaction facilitates lysosomal targeting. Interacts (via GAE domain) with AFTPH/aftiphilin; the interaction is required to recruit AFTPH/aftiphilin to the perinuclear region of the cell.

Its subcellular location is the golgi apparatus. It localises to the cytoplasmic vesicle. The protein localises to the clathrin-coated vesicle membrane. The protein resides in the cytoplasm. It is found in the perinuclear region. Its subcellular location is the clathrin-coated vesicle. It localises to the membrane. The protein localises to the clathrin-coated pit. Its function is as follows. Subunit of clathrin-associated adaptor protein complex 1 that plays a role in protein sorting in the late-Golgi/trans-Golgi network (TGN) and/or endosomes. The AP complexes mediate both the recruitment of clathrin to membranes and the recognition of sorting signals within the cytosolic tails of transmembrane cargo molecules. In association with AFTPH/aftiphilin in the aftiphilin/p200/gamma-synergin complex, involved in the trafficking of transferrin from early to recycling endosomes, and the membrane trafficking of furin and the lysosomal enzyme cathepsin D between the trans-Golgi network (TGN) and endosomes. The sequence is that of AP-1 complex subunit gamma-1 (AP1G1) from Pongo abelii (Sumatran orangutan).